The following is a 297-amino-acid chain: HTH-type transcriptional regulator ArgP (297 aa).

Residues 4 to 60 (PDYRTLQALDAVIRERGFERAAQKLCITQSAVSQRIKQLENMFGQPLLVRTVPPRPT) form the HTH lysR-type domain. The segment at residues 21-40 (FERAAQKLCITQSAVSQRIK) is a DNA-binding region (H-T-H motif).

This sequence belongs to the LysR transcriptional regulatory family. In terms of assembly, homodimer.

In terms of biological role, controls the transcription of genes involved in arginine and lysine metabolism. The protein is HTH-type transcriptional regulator ArgP of Escherichia coli O127:H6 (strain E2348/69 / EPEC).